Consider the following 343-residue polypeptide: Probable potassium channel protein 2 (343 aa).

At 1–7 (METSKKL) the chain is on the cytoplasmic side. Residues 8-28 (VIVAVLSITLILTYAYLISII) traverse the membrane as a helical segment. Residues 29–61 (EGVDYFTALYFSVITITTTGYGDFTPKTFLGRT) are Extracellular-facing. The short motif at 46–51 (TTGYGD) is the Selectivity filter element. A helical membrane pass occupies residues 62–82 (LTVVYLCVGVGIVMYLFSLIA). Topologically, residues 83 to 343 (EFIVEGKFEE…NLVKKKKKKL (261 aa)) are cytoplasmic. Residues 107–227 (KDHYIICGYG…KIAGANRVVS (121 aa)) enclose the RCK N-terminal domain. The region spanning 253–338 (IKIAKDEYEE…LKYLENLVKK (86 aa)) is the RCK C-terminal domain.

The protein localises to the cell membrane. Probable potassium channel protein. The polypeptide is Probable potassium channel protein 2 (Methanocaldococcus jannaschii (strain ATCC 43067 / DSM 2661 / JAL-1 / JCM 10045 / NBRC 100440) (Methanococcus jannaschii)).